The chain runs to 458 residues: F-box/LRR-repeat protein At5g02910 (458 aa).

In terms of domain architecture, F-box spans 10-56; it reads MDFISSLPDEILHHILSSVPTKSAIRTSLLSKRWRYVWSETPSLSID. LRR repeat units lie at residues 57–84, 86–112, 133–161, 162–187, 226–251, 260–285, 325–353, and 389–414; these read CRRA…HLHT, LLNR…SLES, KQLF…LSLS, NCTL…ELLY, CLRL…DLNI, TAGF…TIGG, KLLR…HLND, and ESNL…VVLL.

This Arabidopsis thaliana (Mouse-ear cress) protein is F-box/LRR-repeat protein At5g02910.